The sequence spans 197 residues: MAERKASVERDTLETQIKASINLDGTGKARFDIGVPFLEHMLDQIARHGLIDLDIESKGDLHIDDHHTVEDVGITLGQAFSKAIGDKKGIRRYGHAYVPLDEALSRVVIDFSGRPGLQMHVPFTRATVGGFDVDLFQEFFQGFVNHANVTLHIDTLRGTNTHHQIETVFKAFGRALRMAVELDERMAGQMPSTKGVL.

Belongs to the imidazoleglycerol-phosphate dehydratase family.

It is found in the cytoplasm. The catalysed reaction is D-erythro-1-(imidazol-4-yl)glycerol 3-phosphate = 3-(imidazol-4-yl)-2-oxopropyl phosphate + H2O. The protein operates within amino-acid biosynthesis; L-histidine biosynthesis; L-histidine from 5-phospho-alpha-D-ribose 1-diphosphate: step 6/9. The chain is Imidazoleglycerol-phosphate dehydratase from Pseudomonas fluorescens (strain ATCC BAA-477 / NRRL B-23932 / Pf-5).